Consider the following 434-residue polypeptide: Zinc finger and BTB domain-containing protein 8A (434 aa).

The BTB domain occupies 24–92; that stretch reads CDCSILVEGK…VYSGKLSLTG (69 aa). The tract at residues 134–238 is disordered; that stretch reads SLSDKDTGSN…SGNHVSQSEE (105 aa). A phosphoserine mark is found at S161 and S167. Residues K172, K176, and K193 each participate in a glycyl lysine isopeptide (Lys-Gly) (interchain with G-Cter in SUMO2) cross-link. Over residues 192 to 202 the composition is skewed to basic and acidic residues; the sequence is AKHEQRKEPSK. The segment covering 226–238 has biased composition (polar residues); that stretch reads QTDSGNHVSQSEE. 2 C2H2-type zinc fingers span residues 275 to 297 and 303 to 326; these read FKCP…LRCH and YPCQ…RTIH. K430 participates in a covalent cross-link: Glycyl lysine isopeptide (Lys-Gly) (interchain with G-Cter in SUMO2).

The protein localises to the nucleus. Its function is as follows. May be involved in transcriptional regulation. This is Zinc finger and BTB domain-containing protein 8A (Zbtb8a) from Mus musculus (Mouse).